An 80-amino-acid polypeptide reads, in one-letter code: RNA-binding protein Hfq (80 aa).

One can recognise a Sm domain in the interval 10–69; it reads DPFLNLLRKEHVPVSIYLVNGIKLQGHIESFDQYVVLLRNTVTQMVYKHAISTVVPGRPV.

Belongs to the Hfq family. Homohexamer.

Functionally, RNA chaperone that binds small regulatory RNA (sRNAs) and mRNAs to facilitate mRNA translational regulation in response to envelope stress, environmental stress and changes in metabolite concentrations. Also binds with high specificity to tRNAs. This is RNA-binding protein Hfq from Leptothrix cholodnii (strain ATCC 51168 / LMG 8142 / SP-6) (Leptothrix discophora (strain SP-6)).